The primary structure comprises 478 residues: uncharacterized protein (478 aa).

The N-terminal stretch at 1-19 (MKLFPLCLSALVMSTATCA) is a signal peptide. At 20–214 (SSVEGAIEKV…VPVTLKLQRQ (195 aa)) the chain is on the lumenal side. A helical transmembrane segment spans residues 215–235 (IFLSFSIVYGLISLWWAIRCI). Residues 236-240 (CSRTK) are Cytoplasmic-facing. A helical membrane pass occupies residues 241–261 (LHLVQVCLFCWFSFFILNHPV). At 262–289 (KQRIFSIDNPDEYLVPFVVSCFTYFLGD) the chain is on the lumenal side. Residues 290-310 (GIEYALYSLFITTTVLGFGTI) traverse the membrane as a helical segment. The Cytoplasmic segment spans residues 311–317 (RRTSKKM). The chain crosses the membrane as a helical span at residues 318 to 338 (VLFFSLLTCGQAFLVNVAPMV). The Lumenal segment spans residues 339 to 356 (YPLLYISGSDKACVLRMV). A helical membrane pass occupies residues 357 to 377 (WVFNKFLYLPLITFLGAVLAF). Residues 378-391 (RFRLKKASQFDTRW) are Cytoplasmic-facing. Residues 392-412 (NLFALTLAIIILFAFNDLVIF) traverse the membrane as a helical segment. Residues 413 to 427 (DKLQKLWKYDDTTLE) lie on the Lumenal side of the membrane. The helical transmembrane segment at 428–448 (YLKIVNGGIKFVAFSILLGPY) threads the bilayer. Residues 449–478 (SKLFAEPKSLQLDDFLGKHDGHKDPSLEKF) lie on the Cytoplasmic side of the membrane.

The protein localises to the endoplasmic reticulum membrane. It is found in the golgi apparatus membrane. This is an uncharacterized protein from Schizosaccharomyces pombe (strain 972 / ATCC 24843) (Fission yeast).